A 223-amino-acid chain; its full sequence is MSKDVIEYSKLFAKLVNTNDDTKLDDTIASFLYYMFPRELFIRAISLLESSDMFIYILDRVHNKEGNEHTSLIDVLVDEFYKGSSNSLLEYRLIVKDTNDGAPPILVDIAHWFCSCEEFCKYFHEALEKTDEKEELHDVLINEVDDHLQFSDDRFAQLDPHSLSKQWYFKFDKICCSHLLAFSILLRSSINVLKFFTVNSNKVFVIAIDNIDEWLNLHINIVE.

This sequence belongs to the SHU2 family. As to quaternary structure, component of the SHU complex composed of at least CSM2, PSY3, SHU1 and SHU2.

The protein resides in the nucleus. Plays a role in a RAD51/RAD54-dependent homologous recombination repair (HRR) pathway to repair MMS-induced lesions during S-phase. Required for error-free repair of spontaneous and induced DNA lesions to protect the genome from mutation. The sequence is that of Suppressor of hydroxyurea sensitivity protein 2 (SHU2) from Saccharomyces cerevisiae (strain RM11-1a) (Baker's yeast).